A 247-amino-acid chain; its full sequence is Probable transcriptional regulatory protein LBF_0056 (247 aa).

The protein belongs to the TACO1 family.

It localises to the cytoplasm. In Leptospira biflexa serovar Patoc (strain Patoc 1 / Ames), this protein is Probable transcriptional regulatory protein LBF_0056.